The following is a 91-amino-acid chain: Small ribosomal subunit protein uS19 (91 aa).

Residues M1 to K32 are disordered. Positions P9 to V19 are enriched in basic and acidic residues.

It belongs to the universal ribosomal protein uS19 family.

Its function is as follows. Protein S19 forms a complex with S13 that binds strongly to the 16S ribosomal RNA. The protein is Small ribosomal subunit protein uS19 of Acidithiobacillus ferrooxidans (strain ATCC 53993 / BNL-5-31) (Leptospirillum ferrooxidans (ATCC 53993)).